Reading from the N-terminus, the 523-residue chain is UDP-glucuronosyltransferase 3A1 (523 aa).

The N-terminal stretch at 1–22 (MAAHRSWLLVSFFLLEVLLLEA) is a signal peptide. Topologically, residues 23-487 (AKILTISTLS…QPWHEQYMLD (465 aa)) are extracellular. N-linked (GlcNAc...) asparagine glycosylation is present at asparagine 70. The helical transmembrane segment at 488–508 (VFLFLLGLTLGTLWLSVKVLV) threads the bilayer. Topologically, residues 509–523 (AVTRYLSISRKVKQA) are cytoplasmic.

This sequence belongs to the UDP-glycosyltransferase family. In terms of tissue distribution, highly expressed in kidney, while it is expressed at low levels in liver. Not detected in other tissues examined.

Its subcellular location is the membrane. The enzyme catalyses glucuronate acceptor + UDP-alpha-D-glucuronate = acceptor beta-D-glucuronoside + UDP + H(+). Its function is as follows. UDP-glucuronosyltransferases catalyze phase II biotransformation reactions in which lipophilic substrates are conjugated with glucuronic acid to increase water solubility and enhance excretion. They are of major importance in the conjugation and subsequent elimination of potentially toxic xenobiotics and endogenous compounds. The polypeptide is UDP-glucuronosyltransferase 3A1 (Ugt3a1) (Mus musculus (Mouse)).